The primary structure comprises 84 residues: Delta-conotoxin-like MVIB (84 aa).

The signal sequence occupies residues 1–22 (MKLTCVMIVAVLFLTAWTFVTA). Positions 23 to 51 (DDSRYGLKDLFPKERHEMKNPEASKLNQR) are excised as a propeptide. 3 disulfide bridges follow: Cys-54–Cys-69, Cys-61–Cys-73, and Cys-68–Cys-77. Residue Pro-65 is modified to 4-hydroxyproline. Ser-83 carries the post-translational modification Serine amide.

The protein belongs to the conotoxin O1 superfamily. As to expression, expressed by the venom duct.

It is found in the secreted. Delta-conotoxins bind to site 6 of voltage-gated sodium channels (Nav) and inhibit the inactivation process. The chain is Delta-conotoxin-like MVIB from Conus magus (Magical cone).